We begin with the raw amino-acid sequence, 487 residues long: Probable nuclear hormone receptor HR3 (487 aa).

The segment at residues 48–123 (IIPCKVCGDK…LGMSRDAVKF (76 aa)) is a DNA-binding region (nuclear receptor). NR C4-type zinc fingers lie at residues 51–71 (CKVCGDKSSGVHYGVITCEGC) and 87–111 (CPRNKQCVVDRVNRNRCQYCRLQKC). Residues 145 to 176 (MRAQSDAAPDSSVYDTQTPSSSDQLHHNNYNS) form a disordered region. A compositionally biased stretch (polar residues) spans 157–167 (VYDTQTPSSSD). The region spanning 237 to 480 (INDVLIKTLA…PALYKELFSI (244 aa)) is the NR LBD domain.

The protein belongs to the nuclear hormone receptor family. NR1 subfamily.

The protein resides in the nucleus. In terms of biological role, putative receptor whose ligand is not yet known. This is Probable nuclear hormone receptor HR3 from Drosophila melanogaster (Fruit fly).